Consider the following 222-residue polypeptide: Translation initiation factor 6 (222 aa).

This sequence belongs to the eIF-6 family.

Binds to the 50S ribosomal subunit and prevents its association with the 30S ribosomal subunit to form the 70S initiation complex. The protein is Translation initiation factor 6 of Methanothermobacter thermautotrophicus (strain ATCC 29096 / DSM 1053 / JCM 10044 / NBRC 100330 / Delta H) (Methanobacterium thermoautotrophicum).